We begin with the raw amino-acid sequence, 159 residues long: NADH dehydrogenase [ubiquinone] 1 beta subcomplex subunit 10 (159 aa).

It belongs to the complex I NDUFB10 subunit family. Complex I is composed of 45 different subunits.

It is found in the mitochondrion inner membrane. Accessory subunit of the mitochondrial membrane respiratory chain NADH dehydrogenase (Complex I), that is believed not to be involved in catalysis. Complex I functions in the transfer of electrons from NADH to the respiratory chain. The immediate electron acceptor for the enzyme is believed to be ubiquinone. The protein is NADH dehydrogenase [ubiquinone] 1 beta subcomplex subunit 10 of Bombyx mori (Silk moth).